A 249-amino-acid polypeptide reads, in one-letter code: Gamma-glutamyl peptidase 3 (249 aa).

Positions 19-217 (SEFVKKTYGG…VDRVLNMKLM (199 aa)) constitute a Glutamine amidotransferase type-1 domain. The Nucleophile role is filled by cysteine 103. Catalysis depends on residues histidine 196 and glutamate 198.

The protein belongs to the peptidase C26 family.

It is found in the cytoplasm. The protein localises to the cytosol. It catalyses the reaction an S-[(1E)-1-(hydroxyimino)-omega-(methylsulfanyl)alkyl]-L-glutathione + H2O = an S-[(1E)-1-(hydroxyimino)-omega-(methylsulfanyl)alkyl]-L-cysteinylglycine + L-glutamate. It carries out the reaction (E)-1-(glutathione-S-yl)-2-(1H-indol-3-yl)acetohydroximate + H2O = (E)-1-(glycyl-L-cystein-S-yl)-2-(1H-indol-3-yl)acetohydroximate + L-glutamate. The catalysed reaction is 2-(glutathion-S-yl)-2-(1H-indol-3-yl)acetonitrile + H2O = 2-(glycyl-L-cystein-S-yl)-2-(1H-indol-3-yl)acetonitrile + L-glutamate. The enzyme catalyses (Z)-1-(glutathione-S-yl)-2-phenylacetohydroximate + H2O = (Z)-1-(glycyl-L-cystein-S-yl)-2-phenylacetohydroximate + L-glutamate. Its pathway is secondary metabolite biosynthesis. Its function is as follows. Involved in glucosinolate biosynthesis. Hydrolyzes the gamma-glutamyl peptide bond of several glutathione (GSH) conjugates to produce Cys-Gly conjugates related to glucosinolates. The gamma-Glu-Cys-Gly-GSH conjugates are the sulfur-donating molecule in glucosinolate biosynthesis. Can use the GSH conjugate of the camalexin intermediate IAN (GS-IAN) as substrate. Required for the biosynthesis of camalexin, a pathogen-inducible phytoalexin with antibacterial and antifungal properties. The protein is Gamma-glutamyl peptidase 3 of Arabidopsis thaliana (Mouse-ear cress).